The following is a 211-amino-acid chain: ATP phosphoribosyltransferase (211 aa).

It belongs to the ATP phosphoribosyltransferase family. Short subfamily. As to quaternary structure, heteromultimer composed of HisG and HisZ subunits.

The protein localises to the cytoplasm. The catalysed reaction is 1-(5-phospho-beta-D-ribosyl)-ATP + diphosphate = 5-phospho-alpha-D-ribose 1-diphosphate + ATP. Its pathway is amino-acid biosynthesis; L-histidine biosynthesis; L-histidine from 5-phospho-alpha-D-ribose 1-diphosphate: step 1/9. Its function is as follows. Catalyzes the condensation of ATP and 5-phosphoribose 1-diphosphate to form N'-(5'-phosphoribosyl)-ATP (PR-ATP). Has a crucial role in the pathway because the rate of histidine biosynthesis seems to be controlled primarily by regulation of HisG enzymatic activity. This Pseudomonas putida (strain GB-1) protein is ATP phosphoribosyltransferase.